A 227-amino-acid polypeptide reads, in one-letter code: Phosphoribosylformylglycinamidine synthase subunit PurQ (227 aa).

Positions 3–227 (FAVCVFPGSN…LMLWYSLLSD (225 aa)) constitute a Glutamine amidotransferase type-1 domain. Cysteine 86 acts as the Nucleophile in catalysis. Catalysis depends on residues histidine 203 and glutamate 205.

In terms of assembly, part of the FGAM synthase complex composed of 1 PurL, 1 PurQ and 2 PurS subunits.

The protein resides in the cytoplasm. It catalyses the reaction N(2)-formyl-N(1)-(5-phospho-beta-D-ribosyl)glycinamide + L-glutamine + ATP + H2O = 2-formamido-N(1)-(5-O-phospho-beta-D-ribosyl)acetamidine + L-glutamate + ADP + phosphate + H(+). The enzyme catalyses L-glutamine + H2O = L-glutamate + NH4(+). It participates in purine metabolism; IMP biosynthesis via de novo pathway; 5-amino-1-(5-phospho-D-ribosyl)imidazole from N(2)-formyl-N(1)-(5-phospho-D-ribosyl)glycinamide: step 1/2. In terms of biological role, part of the phosphoribosylformylglycinamidine synthase complex involved in the purines biosynthetic pathway. Catalyzes the ATP-dependent conversion of formylglycinamide ribonucleotide (FGAR) and glutamine to yield formylglycinamidine ribonucleotide (FGAM) and glutamate. The FGAM synthase complex is composed of three subunits. PurQ produces an ammonia molecule by converting glutamine to glutamate. PurL transfers the ammonia molecule to FGAR to form FGAM in an ATP-dependent manner. PurS interacts with PurQ and PurL and is thought to assist in the transfer of the ammonia molecule from PurQ to PurL. The polypeptide is Phosphoribosylformylglycinamidine synthase subunit PurQ (Aquifex aeolicus (strain VF5)).